Consider the following 232-residue polypeptide: uncharacterized protein (232 aa).

A disordered region spans residues 1–46; sequence MNAHNMRGPPGDLAKVVPGSRSGWNEGSRCRQADKGDGQCRNGGRD. Positions 28-46 are enriched in basic and acidic residues; sequence SRCRQADKGDGQCRNGGRD.

This is an uncharacterized protein from Rhizobium meliloti (Ensifer meliloti).